The following is a 351-amino-acid chain: Protein FAM118B (351 aa).

At A2 the chain carries N-acetylalanine. S9 is modified (phosphoserine).

Belongs to the FAM118 family.

Its subcellular location is the nucleus. The protein localises to the cajal body. May play a role in Cajal bodies formation. This is Protein FAM118B (FAM118B) from Homo sapiens (Human).